The primary structure comprises 349 residues: Probable ethanolamine kinase (349 aa).

It belongs to the choline/ethanolamine kinase family.

Its subcellular location is the cytoplasm. The enzyme catalyses ethanolamine + ATP = phosphoethanolamine + ADP + H(+). It functions in the pathway phospholipid metabolism; phosphatidylethanolamine biosynthesis; phosphatidylethanolamine from ethanolamine: step 1/3. Its function is as follows. Highly specific for ethanolamine phosphorylation. May be a rate-controlling step in phosphatidylethanolamine biosynthesis. This chain is Probable ethanolamine kinase (etnk), found in Nematostella vectensis (Starlet sea anemone).